A 460-amino-acid polypeptide reads, in one-letter code: Hydroxyproline dehydrogenase (460 aa).

Lysine 310 is modified (N6-acetyllysine).

Belongs to the proline oxidase family. It depends on FAD as a cofactor.

It catalyses the reaction trans-4-hydroxy-L-proline + a quinone = (3R,5S)-1-pyrroline-3-hydroxy-5-carboxylate + a quinol + H(+). The catalysed reaction is L-proline + a quinone = (S)-1-pyrroline-5-carboxylate + a quinol + H(+). Its activity is regulated as follows. Hydroproxyproline dehydrogenase activity is inhibited by THFA,(1R,3R)3-OH-cyclopentane-COOH and 5-OH-1H-pyrazole-3-COOH. Functionally, dehydrogenase that converts trans-4-L-hydroxyproline to delta-1-pyrroline-3-hydroxy-5-carboxylate (Hyp) using ubiquinone-10 as the terminal electron acceptor. Can also use proline as a substrate but with a very much lower efficiency. Does not react with other diastereomers of Hyp: trans-4-D-hydroxyproline and cis-4-L-hydroxyproline. Ubiquininone analogs such as menadione, duroquinone and ubiquinone-1 react more efficiently than oxygen as the terminal electron acceptor during catalysis. The sequence is that of Hydroxyproline dehydrogenase from Homo sapiens (Human).